Here is a 289-residue protein sequence, read N- to C-terminus: Dermonecrotic toxin LarSicTox-betaID1 (289 aa).

An N-terminal signal peptide occupies residues Glu1–Gly2. The propeptide occupies Ala3 to Thr11. His22 is a catalytic residue. Mg(2+)-binding residues include Glu42 and Asp44. The active-site Nucleophile is His58. 2 disulfide bridges follow: Cys62/Cys68 and Cys64/Cys207. Residue Asp102 coordinates Mg(2+).

The protein belongs to the arthropod phospholipase D family. Class II subfamily. Requires Mg(2+) as cofactor. As to expression, expressed by the venom gland.

The protein resides in the secreted. The catalysed reaction is an N-(acyl)-sphingosylphosphocholine = an N-(acyl)-sphingosyl-1,3-cyclic phosphate + choline. The enzyme catalyses N-hexanoyl-sphing-4-enine-1-phosphocholine = N-(hexanoyl)-sphing-4-enine-1,3-cyclic phosphate + choline. It catalyses the reaction N-(dodecanoyl)-sphing-4-enine-1-phosphocholine = N-dodecanoyl-sphing-4-enine-1,3-cyclic phosphate + choline. It carries out the reaction an N-(acyl)-sphingosylphosphoethanolamine = an N-(acyl)-sphingosyl-1,3-cyclic phosphate + ethanolamine. The catalysed reaction is N-dodecanoyl-heptadecasphing-4-enine-1-phosphoethanolamine = N-dodecanoyl-heptadecasphing-4-enine-1,3-cyclic phosphate + ethanolamine. The enzyme catalyses a 1-acyl-sn-glycero-3-phosphocholine = a 1-acyl-sn-glycero-2,3-cyclic phosphate + choline. It catalyses the reaction 1-tetradecanoyl-sn-glycero-3-phosphocholine = 1-tetradecanoyl-sn-glycero-2,3-cyclic phosphate + choline. It carries out the reaction 1-octanoyl-sn-glycero-3-phosphocholine = 1-octanoyl-sn-glycero-2,3-cyclic phosphate + choline. The catalysed reaction is a 1-acyl-sn-glycero-3-phosphoethanolamine = a 1-acyl-sn-glycero-2,3-cyclic phosphate + ethanolamine. The enzyme catalyses 1-tetradecanoyl-sn-glycero-3-phosphoethanolamine = 1-tetradecanoyl-sn-glycero-2,3-cyclic phosphate + ethanolamine. Its function is as follows. Dermonecrotic toxins cleave the phosphodiester linkage between the phosphate and headgroup of certain phospholipids (sphingolipid and lysolipid substrates), forming an alcohol (often choline) and a cyclic phosphate. This toxin acts on sphingomyelin (SM) and on ceramide phosphoethanolamine (CPE) with high activity. It also acts on lysophosphatidylcholine (LPC) and on lysophosphatidylethanolamine (LPE) with moderate activity. It is not active on lysophosphatidylserine (LPS), and lysophosphatidylglycerol (LPG). It acts by transphosphatidylation, releasing exclusively cyclic phosphate as second products. It is not surprising that spider toxins have affinity for ethanolamine-containing sphingolipids since they are common in insect prey. On mammals, induces dermonecrosis, hemolysis, increased vascular permeability, edema, inflammatory response, and platelet aggregation. The chain is Dermonecrotic toxin LarSicTox-betaID1 from Loxosceles arizonica (Arizona brown spider).